The chain runs to 361 residues: Phospho-N-acetylmuramoyl-pentapeptide-transferase (361 aa).

The next 10 helical transmembrane spans lie at 17–37 (SIYL…LFAG), 66–86 (GTPT…SIFI), 90–110 (TNSL…IGFI), 129–149 (LLFQ…IGLT), 162–182 (ISAY…QIVL), 197–217 (GLAI…AYFT), 232–252 (VGSG…LGFL), 261–281 (IFMG…IAII), 286–306 (LMLP…ILQV), and 340–360 (FWIG…MRGI).

Belongs to the glycosyltransferase 4 family. MraY subfamily. Mg(2+) serves as cofactor.

The protein resides in the cell inner membrane. It carries out the reaction UDP-N-acetyl-alpha-D-muramoyl-L-alanyl-gamma-D-glutamyl-meso-2,6-diaminopimeloyl-D-alanyl-D-alanine + di-trans,octa-cis-undecaprenyl phosphate = di-trans,octa-cis-undecaprenyl diphospho-N-acetyl-alpha-D-muramoyl-L-alanyl-D-glutamyl-meso-2,6-diaminopimeloyl-D-alanyl-D-alanine + UMP. The protein operates within cell wall biogenesis; peptidoglycan biosynthesis. Catalyzes the initial step of the lipid cycle reactions in the biosynthesis of the cell wall peptidoglycan: transfers peptidoglycan precursor phospho-MurNAc-pentapeptide from UDP-MurNAc-pentapeptide onto the lipid carrier undecaprenyl phosphate, yielding undecaprenyl-pyrophosphoryl-MurNAc-pentapeptide, known as lipid I. The sequence is that of Phospho-N-acetylmuramoyl-pentapeptide-transferase from Fusobacterium nucleatum subsp. nucleatum (strain ATCC 25586 / DSM 15643 / BCRC 10681 / CIP 101130 / JCM 8532 / KCTC 2640 / LMG 13131 / VPI 4355).